Reading from the N-terminus, the 270-residue chain is Phosphatidylglycerol--prolipoprotein diacylglyceryl transferase (270 aa).

The next 7 membrane-spanning stretches (helical) occupy residues 10 to 30, 56 to 76, 92 to 112, 120 to 140, 175 to 195, 202 to 222, and 237 to 257; these read VAVA…LVGI, LIFW…VLFY, WKGG…AWWF, FFQL…AGRI, SQLY…NLYA, MAVS…VEFV, and VTMG…LIWL. Arginine 139 lines the a 1,2-diacyl-sn-glycero-3-phospho-(1'-sn-glycerol) pocket.

Belongs to the Lgt family.

The protein resides in the cell inner membrane. The catalysed reaction is L-cysteinyl-[prolipoprotein] + a 1,2-diacyl-sn-glycero-3-phospho-(1'-sn-glycerol) = an S-1,2-diacyl-sn-glyceryl-L-cysteinyl-[prolipoprotein] + sn-glycerol 1-phosphate + H(+). The protein operates within protein modification; lipoprotein biosynthesis (diacylglyceryl transfer). In terms of biological role, catalyzes the transfer of the diacylglyceryl group from phosphatidylglycerol to the sulfhydryl group of the N-terminal cysteine of a prolipoprotein, the first step in the formation of mature lipoproteins. This is Phosphatidylglycerol--prolipoprotein diacylglyceryl transferase from Pseudomonas syringae pv. syringae (strain B728a).